The chain runs to 156 residues: UPF0336 protein SACE_6876 (156 aa).

Positions 8 to 128 (IGREYPPTPA…DFLTVRAEIT (121 aa)) constitute a MaoC-like domain.

The protein belongs to the UPF0336 family.

This Saccharopolyspora erythraea (strain ATCC 11635 / DSM 40517 / JCM 4748 / NBRC 13426 / NCIMB 8594 / NRRL 2338) protein is UPF0336 protein SACE_6876.